We begin with the raw amino-acid sequence, 35 residues long: Thaumatin-like protein 6 (35 aa).

It belongs to the thaumatin family.

The polypeptide is Thaumatin-like protein 6 (Glebionis coronaria (Crown daisy)).